A 156-amino-acid polypeptide reads, in one-letter code: MACRLFWASRVASHLRISVAQRGFSSVVLKDLKYADSHEWVKIDGNKATFGITDHAQDHLGDVVYVELPDVGHSVSQGKSFGAVESVKATSDINSPVSGKVVEVNEELTESPGLVNSSPYEQGWIIKVELSDAGEAEKLMDSDKYSKFCEEEDAKH.

A mitochondrion-targeting transit peptide spans 1-23 (MACRLFWASRVASHLRISVAQRG). One can recognise a Lipoyl-binding domain in the interval 47–129 (KATFGITDHA…YEQGWIIKVE (83 aa)). At K88 the chain carries N6-lipoyllysine. S131 carries the post-translational modification Phosphoserine.

This sequence belongs to the GcvH family. As to quaternary structure, the glycine cleavage system is composed of four proteins: P, T, L and H. It depends on (R)-lipoate as a cofactor.

The protein localises to the mitochondrion. The glycine decarboxylase (GDC) or glycine cleavage system catalyzes the degradation of glycine. The H protein shuttles the methylamine group of glycine from the P protein to the T protein. The protein is Glycine cleavage system H protein 2, mitochondrial (GDH2) of Arabidopsis thaliana (Mouse-ear cress).